The primary structure comprises 296 residues: GTP-binding protein GEM (296 aa).

2 disordered regions span residues 1–20 (MTLNNVTMRQGTVGMQPQQQ) and 37–68 (PHQYSHRNRHSATPEDHCRRSWSSDSTDSVIS). Over residues 57 to 68 (SWSSDSTDSVIS) the composition is skewed to low complexity. GTP-binding positions include 82–89 (GEQGVGKS) and 191–194 (NKSD). Positions 266–285 (ARRFWGKIVAKNNKNMAFKL) are calmodulin-binding.

The protein belongs to the small GTPase superfamily. RGK family. Interacts with calmodulin in a Ca(2+)-dependent manner. Binds ROCK1. Post-translationally, phosphorylated on tyrosine residues. Most abundant in thymus, spleen, kidney, lung, and testis. Less abundant in heart, brain, liver and skeletal muscle.

It localises to the cell membrane. Could be a regulatory protein, possibly participating in receptor-mediated signal transduction at the plasma membrane. Has guanine nucleotide-binding activity but undetectable intrinsic GTPase activity. The sequence is that of GTP-binding protein GEM (GEM) from Homo sapiens (Human).